The following is an 89-amino-acid chain: Small ribosomal subunit protein uS19 (89 aa).

It belongs to the universal ribosomal protein uS19 family.

In terms of biological role, protein S19 forms a complex with S13 that binds strongly to the 16S ribosomal RNA. This Vesicomyosocius okutanii subsp. Calyptogena okutanii (strain HA) protein is Small ribosomal subunit protein uS19.